The following is a 237-amino-acid chain: Ras-related protein Rab-23 (237 aa).

Positions 20, 21, 22, 23, 24, 38, and 41 each coordinate GTP. Residue S23 participates in Mg(2+) binding. The Switch 1 signature appears at 28–46; that stretch reads RYCKGIFTKDYKKTIGVDF. The Mg(2+) site is built by T41 and D64. The Switch 2 signature appears at 65-84; that stretch reads TAGQEEFDAITKAYYRGAQA. Residues G67, N121, K122, D124, S151, V152, and K153 each coordinate GTP. A phosphoserine mark is found at S186 and S187. Positions 188–208 are enriched in polar residues; sequence SNKIGVFNTSGGSHSGQNSGT. Residues 188 to 237 form a disordered region; sequence SNKIGVFNTSGGSHSGQNSGTLNGGDVINLRPNKQRTKKNRNPFSSCSIP. At C234 the chain carries Cysteine methyl ester. A lipid anchor (S-geranylgeranyl cysteine) is attached at C234. Positions 235-237 are cleaved as a propeptide — removed in mature form; sequence SIP.

Belongs to the small GTPase superfamily. Rab family. Interacts with SUFU. Requires Mg(2+) as cofactor.

It localises to the cell membrane. The protein resides in the cytoplasm. It is found in the cytoplasmic vesicle. The protein localises to the autophagosome. Its subcellular location is the endosome membrane. It localises to the phagosome. The protein resides in the phagosome membrane. It catalyses the reaction GTP + H2O = GDP + phosphate + H(+). Its activity is regulated as follows. Regulated by guanine nucleotide exchange factors (GEFs) which promote the exchange of bound GDP for free GTP. Regulated by GTPase activating proteins (GAPs) which increase the GTP hydrolysis activity. Inhibited by GDP dissociation inhibitors (GDIs). The small GTPases Rab are key regulators of intracellular membrane trafficking, from the formation of transport vesicles to their fusion with membranes. Rabs cycle between an inactive GDP-bound form and an active GTP-bound form that is able to recruit to membranes different set of downstream effectors directly responsible for vesicle formation, movement, tethering and fusion. Together with SUFU, prevents nuclear import of GLI1, and thereby inhibits GLI1 transcription factor activity. Regulates GLI1 in differentiating chondrocytes. Likewise, regulates GLI3 proteolytic processing and modulates GLI2 and GLI3 transcription factor activity. Plays a role in autophagic vacuole assembly, and mediates defense against pathogens, such as S.aureus, by promoting their capture by autophagosomes that then merge with lysosomes. This is Ras-related protein Rab-23 from Homo sapiens (Human).